A 176-amino-acid polypeptide reads, in one-letter code: Ribosome maturation factor RimM (176 aa).

The region spanning 100–173 (PGEFHLLDLL…WLMVCPPPGL (74 aa)) is the PRC barrel domain.

This sequence belongs to the RimM family. As to quaternary structure, binds ribosomal protein uS19.

The protein resides in the cytoplasm. Its function is as follows. An accessory protein needed during the final step in the assembly of 30S ribosomal subunit, possibly for assembly of the head region. Essential for efficient processing of 16S rRNA. May be needed both before and after RbfA during the maturation of 16S rRNA. It has affinity for free ribosomal 30S subunits but not for 70S ribosomes. The chain is Ribosome maturation factor RimM from Prochlorococcus marinus (strain SARG / CCMP1375 / SS120).